A 205-amino-acid polypeptide reads, in one-letter code: Outer-membrane lipoprotein carrier protein (205 aa).

Residues 1 to 19 (MKKIIICFIFVFSINVSFA) form the signal peptide.

The protein belongs to the LolA family. Monomer.

It localises to the periplasm. Participates in the translocation of lipoproteins from the inner membrane to the outer membrane. Only forms a complex with a lipoprotein if the residue after the N-terminal Cys is not an aspartate (The Asp acts as a targeting signal to indicate that the lipoprotein should stay in the inner membrane). The sequence is that of Outer-membrane lipoprotein carrier protein from Francisella tularensis subsp. tularensis (strain FSC 198).